The chain runs to 713 residues: Leucine-rich repeat neuronal protein 2 (713 aa).

The N-terminal stretch at 1–18 (MRLLVAPLLLAWVAGATA) is a signal peptide. Topologically, residues 19–630 (AVPVVPWHVP…CHRALGDRPG (612 aa)) are extracellular. One can recognise an LRRNT domain in the interval 20-69 (VPVVPWHVPCPPQCACQIRPWYTPRSSYREATTVDCNDLFLTAVPPALPA). 12 LRR repeats span residues 70-91 (GTQTLLLQSNSIVRVDQSELGY), 94-115 (NLTELDLSQNSFSDARDCDFHA), 118-139 (QLLSLHLEENQLTRLEDHSFAG), 142-163 (SLQELYLNHNQLYRIAPRAFSG), 166-187 (NLLRLHLNSNLLRAIDSRWFEM), 190-211 (NLEILMIGGNKVDAILDMNFRP), 214-235 (NLRSLVLAGMNLREISDYALEG), 238-259 (SLESLSFYDNQLARVPRRALEQ), 262-283 (GLKFLDLNKNPLQRVGPGDFAN), 286-305 (HLKELGLNNMEELVSIDKFA), 311-333 (ELTKLDITNNPRLSFIHPRAFHH), and 336-357 (QMETLMLNNNALSALHQQTVES). A glycan (N-linked (GlcNAc...) asparagine) is linked at N94. An LRRCT domain is found at 369-422 (NPIRCDCVIRWANATGTRVRFIEPQSTLCAEPPDLQRLPVREVPFREMTDHCLP). N381 is a glycosylation site (N-linked (GlcNAc...) asparagine). One can recognise an Ig-like C2-type domain in the interval 422–511 (PLISPRSFPP…LVGADTKTVS (90 aa)). The cysteines at positions 445 and 497 are disulfide-linked. N-linked (GlcNAc...) asparagine glycosylation is found at N555 and N583. Residues 631–651 (LIAILALAVLLLAAGLAAHLG) form a helical membrane-spanning segment. The Cytoplasmic segment spans residues 652-713 (TGQPRKGVGG…TLLPPLSQNS (62 aa)).

Overamplified in malignant gliomas.

It localises to the membrane. In Homo sapiens (Human), this protein is Leucine-rich repeat neuronal protein 2 (LRRN2).